The primary structure comprises 258 residues: Transcription factor TT2 (258 aa).

HTH myb-type domains follow at residues 11-63 (REEL…KNYL) and 64-118 (RPGI…RKRL). DNA-binding regions (H-T-H motif) lie at residues 39-63 (WSTL…KNYL) and 91-114 (WSLI…NSNL). Residue 47–54 (GLKRCGKS) coordinates ATP.

As to quaternary structure, interacts with BHLH2/EGL3/MYC146, BHLH12/MYC1 and BHLH42/TT8. As to expression, expressed at a high level in immature siliques and at a lower level in flowers. Undetected in young seedlings, roots, leaves and inflorescence stems.

The protein resides in the nucleus. Its function is as follows. Transcription activator, when associated with BHLH2/EGL3/MYC146, BHLH12/MYC1, or BHLH42/TT8. Involved in the control of flavonoid late metabolism in developing siliques. Plays a key role in determining the tissue-specific activation of leucoanthocyanidin reductase (BANYULS). This Arabidopsis thaliana (Mouse-ear cress) protein is Transcription factor TT2 (TT2).